The primary structure comprises 712 residues: WD repeat-containing protein 91 (712 aa).

Residues 148–180 (RRTNQVQEENEVLRQKLFALQAEIHRLKKEEQQ) adopt a coiled-coil conformation. Ser221 is subject to Phosphoserine. A compositionally biased stretch (low complexity) spans 230 to 243 (LLPQSKKSPSRLSP). A disordered region spans residues 230–336 (LLPQSKKSPS…EAEPCPELHT (107 aa)). 2 positions are modified to phosphoserine: Ser253 and Ser258. Positions 297-308 (RLQDHGKERKEL) are enriched in basic and acidic residues. WD repeat units lie at residues 371–410 (EHHSSIMHCRVDCSGRRVASLDVDGVIKVWSFNPIMQTKA), 413–453 (ISKS…NLCE), 480–520 (AAPS…QQLQ), 525–564 (PEPIAINCTAFNHNGNLLVTGAADGVIRLFDMQQHECAMS), 567–606 (AHYGEVYSVEFSYDENTVYSIGEDGKFIQWNIHKSGLKVS), 629–667 (VQVPRGRLFAFDSEGNYMLTCSATGGVIYKLGGDEKVLE), and 674–712 (GHRAPVVTVDWSTAMDCGTCLTASMDGKIKLTTLLAHKA).

Belongs to the WD repeat WDR91 family. In terms of assembly, interacts with WDR81; involved in early to late endosome cargo transport. Interacts with BECN1; negatively regulates the PI3 kinase/PI3K activity associated with endosomal membranes.

The protein resides in the early endosome membrane. The protein localises to the late endosome membrane. Functionally, functions as a negative regulator of the PI3 kinase/PI3K activity associated with endosomal membranes via BECN1, a core subunit of the PI3K complex. By modifying the phosphatidylinositol 3-phosphate/PtdInsP3 content of endosomal membranes may regulate endosome fusion, recycling, sorting and early to late endosome transport. It is for instance, required for the delivery of cargos like BST2/tetherin from early to late endosome and thereby participates indirectly to their degradation by the lysosome. May play a role in meiosis. This is WD repeat-containing protein 91 from Pongo abelii (Sumatran orangutan).